Consider the following 463-residue polypeptide: Exodeoxyribonuclease 7 large subunit (463 aa).

Belongs to the XseA family. In terms of assembly, heterooligomer composed of large and small subunits.

It is found in the cytoplasm. It carries out the reaction Exonucleolytic cleavage in either 5'- to 3'- or 3'- to 5'-direction to yield nucleoside 5'-phosphates.. Functionally, bidirectionally degrades single-stranded DNA into large acid-insoluble oligonucleotides, which are then degraded further into small acid-soluble oligonucleotides. The polypeptide is Exodeoxyribonuclease 7 large subunit (Pseudomonas syringae pv. syringae (strain B728a)).